A 269-amino-acid polypeptide reads, in one-letter code: uncharacterized protein (269 aa).

The 69-residue stretch at 5–73 (APKWRELADR…RGHGTVVRRK (69 aa)) folds into the HTH gntR-type domain. A DNA-binding region (H-T-H motif) is located at residues 33 to 52 (IRDLVEAGEGSKETVHRAYK).

In terms of biological role, the imp locus inhibits the extrachromosomal maintenance of the Streptomyces plasmid SLP1. This is an uncharacterized protein from Streptomyces coelicolor (strain ATCC BAA-471 / A3(2) / M145).